A 384-amino-acid polypeptide reads, in one-letter code: Glucans biosynthesis protein C (384 aa).

Helical transmembrane passes span 17–37 (AWLMLLGIPFHISLIYSTHSW), 54–74 (FIHAFRMQVFFVISGYFSYML), 91–111 (VGIPMLTAIPLLTLPQFILLQ), 140–160 (LWFLLVLVILTTVSIGIFTWF), 173–193 (AISLARLSLIFFLLGMAYAAI), 212–232 (FIVMQTLFYVPFFILGALAFI), 240–260 (FTTPSRGCTLGAAVAFIAYLL), 274–294 (TESVITMVMGLWMVNVVFSLG), 311–331 (ASLFIYLVHHPLTLFFGAYIT), and 338–358 (LIGFLCGLIFVMGIALILYEI).

Belongs to the acyltransferase 3 family. OpgC subfamily.

Its subcellular location is the cell membrane. Its pathway is glycan metabolism; osmoregulated periplasmic glucan (OPG) biosynthesis. Necessary for the succinyl substitution of periplasmic glucans. Could catalyze the transfer of succinyl residues from the cytoplasmic side of the membrane to the nascent glucan backbones on the periplasmic side of the membrane. The chain is Glucans biosynthesis protein C from Salmonella agona (strain SL483).